Reading from the N-terminus, the 406-residue chain is Uronyl 2-sulfotransferase (406 aa).

The Cytoplasmic portion of the chain corresponds to 1 to 49; it reads MKKKQQHPGGGADPWPHGAPMGGAPPGLGSWKRRVPLLPFLRFSLRDYG. A helical; Signal-anchor for type II membrane protein transmembrane segment spans residues 50-70; sequence FCMATLLVFCLGSLLYQLSGG. At 71 to 406 the chain is on the lumenal side; sequence PPRFLLDLRQ…EKWLEDIYKR (336 aa). Asn-84, Asn-140, and Asn-155 each carry an N-linked (GlcNAc...) asparagine glycan. His-168 is an active-site residue. Residues Asn-173 and Asn-319 are each glycosylated (N-linked (GlcNAc...) asparagine). Positions 387–399 are enriched in acidic residues; the sequence is EPIDDEEQDDEKW. Positions 387–406 are disordered; the sequence is EPIDDEEQDDEKWLEDIYKR.

It belongs to the sulfotransferase 3 family. In terms of tissue distribution, widely expressed.

The protein localises to the golgi apparatus membrane. Sulfotransferase that catalyzes the transfer of sulfate to the position 2 of uronyl residues in glycosaminoglycan chains. Has mainly activity toward iduronyl residues in dermatan sulfate, and weaker activity toward glucuronyl residues of chondroitin sulfate. Has little to no activity toward desulfated N-resulfated heparin or N-sulfoheparosan. This is Uronyl 2-sulfotransferase from Homo sapiens (Human).